A 61-amino-acid polypeptide reads, in one-letter code: DNA gyrase inhibitor YacG (61 aa).

Residues Cys14, Cys17, Cys29, and Cys33 each contribute to the Zn(2+) site.

The protein belongs to the DNA gyrase inhibitor YacG family. In terms of assembly, interacts with GyrB. Zn(2+) serves as cofactor.

Its function is as follows. Inhibits all the catalytic activities of DNA gyrase by preventing its interaction with DNA. Acts by binding directly to the C-terminal domain of GyrB, which probably disrupts DNA binding by the gyrase. The sequence is that of DNA gyrase inhibitor YacG from Zymomonas mobilis subsp. mobilis (strain ATCC 31821 / ZM4 / CP4).